The sequence spans 509 residues: Protein WHAT'S THIS FACTOR 1 homolog, chloroplastic (509 aa).

The transit peptide at methionine 1–valine 56 directs the protein to the chloroplast. A PORR domain is found at lysine 65–alanine 393. 2 disordered regions span residues valine 402–glutamate 431 and serine 444–tryptophan 509. Positions glutamate 461–glycine 474 are enriched in acidic residues.

The protein resides in the plastid. It localises to the chloroplast. RNA-binding protein involved in group II intron splicing. Binds specific group II introns and promotes their splicing. Functions in the context of a heterodimer with the ribonuclease III domain-containing protein RNC1. The polypeptide is Protein WHAT'S THIS FACTOR 1 homolog, chloroplastic (Oryza sativa subsp. japonica (Rice)).